The chain runs to 333 residues: Beta-ketoacyl-[acyl-carrier-protein] synthase III (333 aa).

Active-site residues include C112 and H255. Residues Q256–R260 are ACP-binding. Residue N285 is part of the active site.

The protein belongs to the thiolase-like superfamily. FabH family. In terms of assembly, homodimer.

The protein localises to the cytoplasm. It catalyses the reaction malonyl-[ACP] + acetyl-CoA + H(+) = 3-oxobutanoyl-[ACP] + CO2 + CoA. The protein operates within lipid metabolism; fatty acid biosynthesis. Its function is as follows. Catalyzes the condensation reaction of fatty acid synthesis by the addition to an acyl acceptor of two carbons from malonyl-ACP. Catalyzes the first condensation reaction which initiates fatty acid synthesis and may therefore play a role in governing the total rate of fatty acid production. Possesses both acetoacetyl-ACP synthase and acetyl transacylase activities. Its substrate specificity determines the biosynthesis of branched-chain and/or straight-chain of fatty acids. In Synechococcus sp. (strain RCC307), this protein is Beta-ketoacyl-[acyl-carrier-protein] synthase III.